Consider the following 426-residue polypeptide: Docking protein 3 (426 aa).

One can recognise a PH domain in the interval 4–115 (PVKDGIIYVQ…WIEQLCQLAF (112 aa)). The region spanning 145–249 (DLTEFPVLVL…ACQQQGQESP (105 aa)) is the IRS-type PTB domain. Residues 243-282 (QQGQESPQPSAQGLSNQPWGAEAEDPQCSPTLGRAHSGSH) form a disordered region. A compositionally biased stretch (polar residues) spans 247-260 (ESPQPSAQGLSNQP). Tyr331 bears the Phosphotyrosine mark. Residues 357–426 (GCRQAPEGHS…RDGPGARDWS (70 aa)) form a disordered region. Residues 402–411 (KPQRTLRAKL) show a composition bias toward basic residues.

This sequence belongs to the DOK family. Type A subfamily. In terms of assembly, homooligomer. Interacts with GRB2 and INPP5D/SHIP. Tyrosine-phosphorylated in the presence of GRB2.

Its subcellular location is the cytoplasm. The protein resides in the cell membrane. Functionally, DOK proteins are enzymatically inert adaptor or scaffolding proteins. They provide a docking platform for the assembly of multimolecular signaling complexes. Plays a role as negative regulator of the mobilization of calcium ions and of calcium signaling. The chain is Docking protein 3 (DOK3) from Gallus gallus (Chicken).